Consider the following 450-residue polypeptide: 5-amino-6-(D-ribitylamino)uracil--L-tyrosine 4-hydroxyphenyl transferase (450 aa).

Positions 1 to 24 (MPDVPETVGTPDGSTEFEHRPTTD) are disordered. The Radical SAM core domain maps to 82–350 (VTFVANLNNN…MIAVSRLFLD (269 aa)). Positions 96, 100, and 103 each coordinate [4Fe-4S] cluster. The tract at residues 430 to 450 (PDADVLGPQLGPRADGTPLLD) is disordered.

This sequence belongs to the radical SAM superfamily. CofH family. In terms of assembly, consists of two subunits, CofG and CofH. Requires [4Fe-4S] cluster as cofactor.

It carries out the reaction 5-amino-6-(D-ribitylamino)uracil + L-tyrosine + S-adenosyl-L-methionine = 5-amino-5-(4-hydroxybenzyl)-6-(D-ribitylimino)-5,6-dihydrouracil + 2-iminoacetate + 5'-deoxyadenosine + L-methionine + H(+). Its pathway is cofactor biosynthesis; coenzyme F0 biosynthesis. Its function is as follows. Catalyzes the radical-mediated synthesis of 5-amino-5-(4-hydroxybenzyl)-6-(D-ribitylimino)-5,6-dihydrouracil from 5-amino-6-(D-ribitylamino)uracil and L-tyrosine. This Haloarcula marismortui (strain ATCC 43049 / DSM 3752 / JCM 8966 / VKM B-1809) (Halobacterium marismortui) protein is 5-amino-6-(D-ribitylamino)uracil--L-tyrosine 4-hydroxyphenyl transferase.